Consider the following 179-residue polypeptide: Cytochrome b6-f complex iron-sulfur subunit (179 aa).

The helical transmembrane segment at 21–43 (LLTFGSVTGVALGALYPVVNYFI) threads the bilayer. In terms of domain architecture, Rieske spans 61 to 162 (GNDVVLSKFL…VSVTDDKVFL (102 aa)). 4 residues coordinate [2Fe-2S] cluster: Cys108, His110, Cys126, and His129. Residues Cys113 and Cys128 are joined by a disulfide bond.

It belongs to the Rieske iron-sulfur protein family. In terms of assembly, the 4 large subunits of the cytochrome b6-f complex are cytochrome b6, subunit IV (17 kDa polypeptide, PetD), cytochrome f and the Rieske protein, while the 4 small subunits are PetG, PetL, PetM and PetN. The complex functions as a dimer. The cofactor is [2Fe-2S] cluster.

The protein localises to the cellular thylakoid membrane. It catalyses the reaction 2 oxidized [plastocyanin] + a plastoquinol + 2 H(+)(in) = 2 reduced [plastocyanin] + a plastoquinone + 4 H(+)(out). In terms of biological role, component of the cytochrome b6-f complex, which mediates electron transfer between photosystem II (PSII) and photosystem I (PSI), cyclic electron flow around PSI, and state transitions. The polypeptide is Cytochrome b6-f complex iron-sulfur subunit (Synechococcus elongatus (strain ATCC 33912 / PCC 7942 / FACHB-805) (Anacystis nidulans R2)).